The chain runs to 72 residues: General transcription factor IIH subunit 5 (72 aa).

It belongs to the TFB5 family. Component of the 7-subunit TFIIH core complex composed of XPB/repB, XPD/repD, gtf2h1, gtf2h2, gtf2h3, gtf2h4 and gtf2h5, which is active in NER. The core complex associates with the 3-subunit CDK-activating kinase (CAK) module composed of cycH/cyclin H, cdk7 and mnat1 to form the 10-subunit holoenzyme (holo-TFIIH) active in transcription.

Its subcellular location is the nucleus. Functionally, component of the general transcription and DNA repair factor IIH (TFIIH) core complex, which is involved in general and transcription-coupled nucleotide excision repair (NER) of damaged DNA and, when complexed to CAK, in RNA transcription by RNA polymerase II. In NER, TFIIH acts by opening DNA around the lesion to allow the excision of the damaged oligonucleotide and its replacement by a new DNA fragment. In transcription, TFIIH has an essential role in transcription initiation. When the pre-initiation complex (PIC) has been established, TFIIH is required for promoter opening and promoter escape. Phosphorylation of the C-terminal tail (CTD) of the largest subunit of RNA polymerase II by the kinase module CAK controls the initiation of transcription. This is General transcription factor IIH subunit 5 (gtf2h5) from Dictyostelium discoideum (Social amoeba).